A 355-amino-acid polypeptide reads, in one-letter code: S-adenosylmethionine:tRNA ribosyltransferase-isomerase (355 aa).

It belongs to the QueA family. As to quaternary structure, monomer.

It is found in the cytoplasm. It carries out the reaction 7-aminomethyl-7-carbaguanosine(34) in tRNA + S-adenosyl-L-methionine = epoxyqueuosine(34) in tRNA + adenine + L-methionine + 2 H(+). Its pathway is tRNA modification; tRNA-queuosine biosynthesis. Functionally, transfers and isomerizes the ribose moiety from AdoMet to the 7-aminomethyl group of 7-deazaguanine (preQ1-tRNA) to give epoxyqueuosine (oQ-tRNA). The protein is S-adenosylmethionine:tRNA ribosyltransferase-isomerase of Pectobacterium atrosepticum (strain SCRI 1043 / ATCC BAA-672) (Erwinia carotovora subsp. atroseptica).